The primary structure comprises 91 residues: Small ribosomal subunit protein uS19 (91 aa).

Belongs to the universal ribosomal protein uS19 family.

Functionally, protein S19 forms a complex with S13 that binds strongly to the 16S ribosomal RNA. The sequence is that of Small ribosomal subunit protein uS19 from Metamycoplasma arthritidis (strain 158L3-1) (Mycoplasma arthritidis).